We begin with the raw amino-acid sequence, 259 residues long: Dihydroorotate dehydrogenase B (NAD(+)), electron transfer subunit (259 aa).

Residues 1–101 (MKIEDCTVEE…MGPLGRGYDV (101 aa)) enclose the FAD-binding FR-type domain. FAD contacts are provided by residues 52 to 55 (RPIS), 69 to 71 (IYR), and 76 to 77 (GT). The [2Fe-2S] cluster site is built by Cys223, Cys228, Cys231, and Cys245.

This sequence belongs to the PyrK family. Heterotetramer of 2 PyrK and 2 PyrD type B subunits. [2Fe-2S] cluster is required as a cofactor. FAD serves as cofactor.

Its pathway is pyrimidine metabolism; UMP biosynthesis via de novo pathway; orotate from (S)-dihydroorotate (NAD(+) route): step 1/1. Its function is as follows. Responsible for channeling the electrons from the oxidation of dihydroorotate from the FMN redox center in the PyrD type B subunit to the ultimate electron acceptor NAD(+). In Fusobacterium nucleatum subsp. nucleatum (strain ATCC 25586 / DSM 15643 / BCRC 10681 / CIP 101130 / JCM 8532 / KCTC 2640 / LMG 13131 / VPI 4355), this protein is Dihydroorotate dehydrogenase B (NAD(+)), electron transfer subunit.